The sequence spans 195 residues: MRKAEISRKTAETDISVTVDLDGTGRYDIRTGVGFFDHMMDQLARHALIDITLRCEGDLHIDDHHTVEDCGIALGQALTRALGDKRGIRRYGSFHLAMDDALVRAALDLSGRPFLVWNLPFPTEKIGSFDTELVREFFQALATHGGITLHVDLIHGVNSHHIAEAAFKAVARSLREAVEPDPRRADAIPSTKGML.

This sequence belongs to the imidazoleglycerol-phosphate dehydratase family.

It is found in the cytoplasm. It carries out the reaction D-erythro-1-(imidazol-4-yl)glycerol 3-phosphate = 3-(imidazol-4-yl)-2-oxopropyl phosphate + H2O. It participates in amino-acid biosynthesis; L-histidine biosynthesis; L-histidine from 5-phospho-alpha-D-ribose 1-diphosphate: step 6/9. This chain is Imidazoleglycerol-phosphate dehydratase, found in Cereibacter sphaeroides (strain ATCC 17023 / DSM 158 / JCM 6121 / CCUG 31486 / LMG 2827 / NBRC 12203 / NCIMB 8253 / ATH 2.4.1.) (Rhodobacter sphaeroides).